We begin with the raw amino-acid sequence, 611 residues long: UvrABC system protein C (611 aa).

A GIY-YIG domain is found at 6-84; the sequence is NNPGVYRMFN…IKRLRPRFNV (79 aa). In terms of domain architecture, UVR spans 194–229; the sequence is QSVKDHLAAAMQAASADLDFEHAAVYRDRLAALSHV.

It belongs to the UvrC family. In terms of assembly, interacts with UvrB in an incision complex.

The protein resides in the cytoplasm. In terms of biological role, the UvrABC repair system catalyzes the recognition and processing of DNA lesions. UvrC both incises the 5' and 3' sides of the lesion. The N-terminal half is responsible for the 3' incision and the C-terminal half is responsible for the 5' incision. The protein is UvrABC system protein C of Brucella abortus (strain 2308).